A 122-amino-acid chain; its full sequence is Small ribosomal subunit protein uS13 (122 aa).

Residues 99-122 (RGQRTHTNARTRKGPAKAIAGKKK) form a disordered region.

This sequence belongs to the universal ribosomal protein uS13 family. Part of the 30S ribosomal subunit. Forms a loose heterodimer with protein S19. Forms two bridges to the 50S subunit in the 70S ribosome.

Its function is as follows. Located at the top of the head of the 30S subunit, it contacts several helices of the 16S rRNA. In the 70S ribosome it contacts the 23S rRNA (bridge B1a) and protein L5 of the 50S subunit (bridge B1b), connecting the 2 subunits; these bridges are implicated in subunit movement. Contacts the tRNAs in the A and P-sites. The polypeptide is Small ribosomal subunit protein uS13 (Rhizobium etli (strain ATCC 51251 / DSM 11541 / JCM 21823 / NBRC 15573 / CFN 42)).